The sequence spans 284 residues: Diaminopimelate epimerase (284 aa).

Substrate is bound by residues asparagine 20, glutamine 53, and asparagine 73. The active-site Proton donor is the cysteine 82. Substrate contacts are provided by residues 83–84 (GN), asparagine 167, asparagine 200, and 218–219 (ER). Cysteine 227 (proton acceptor) is an active-site residue. 228-229 (GS) serves as a coordination point for substrate.

The protein belongs to the diaminopimelate epimerase family. Homodimer.

It localises to the cytoplasm. It carries out the reaction (2S,6S)-2,6-diaminopimelate = meso-2,6-diaminopimelate. It functions in the pathway amino-acid biosynthesis; L-lysine biosynthesis via DAP pathway; DL-2,6-diaminopimelate from LL-2,6-diaminopimelate: step 1/1. Functionally, catalyzes the stereoinversion of LL-2,6-diaminopimelate (L,L-DAP) to meso-diaminopimelate (meso-DAP), a precursor of L-lysine and an essential component of the bacterial peptidoglycan. This chain is Diaminopimelate epimerase, found in Xylella fastidiosa (strain M23).